The sequence spans 213 residues: Large ribosomal subunit protein uL1 (213 aa).

This sequence belongs to the universal ribosomal protein uL1 family. In terms of assembly, part of the 50S ribosomal subunit.

Its function is as follows. Binds directly to 23S rRNA. Probably involved in E site tRNA release. In terms of biological role, protein L1 is also a translational repressor protein, it controls the translation of its operon by binding to its mRNA. In Methanococcus voltae, this protein is Large ribosomal subunit protein uL1.